The chain runs to 373 residues: Lipoyl synthase (373 aa).

The disordered stretch occupies residues 14-36; that stretch reads VSNDHPSSSPLQPGVKQSGEDKI. Residues Cys-81, Cys-86, Cys-92, Cys-107, Cys-111, Cys-114, and Ser-323 each contribute to the [4Fe-4S] cluster site. The Radical SAM core domain occupies 93–312; that stretch reads FSHGTATFMI…EEYGMALGFS (220 aa). The tract at residues 346-373 is disordered; that stretch reads PAVSSTEHRERNTIASKSASKTESIHHR. A compositionally biased stretch (polar residues) spans 358–367; the sequence is TIASKSASKT.

The protein belongs to the radical SAM superfamily. Lipoyl synthase family. [4Fe-4S] cluster is required as a cofactor.

The protein localises to the cytoplasm. The enzyme catalyses [[Fe-S] cluster scaffold protein carrying a second [4Fe-4S](2+) cluster] + N(6)-octanoyl-L-lysyl-[protein] + 2 oxidized [2Fe-2S]-[ferredoxin] + 2 S-adenosyl-L-methionine + 4 H(+) = [[Fe-S] cluster scaffold protein] + N(6)-[(R)-dihydrolipoyl]-L-lysyl-[protein] + 4 Fe(3+) + 2 hydrogen sulfide + 2 5'-deoxyadenosine + 2 L-methionine + 2 reduced [2Fe-2S]-[ferredoxin]. It functions in the pathway protein modification; protein lipoylation via endogenous pathway; protein N(6)-(lipoyl)lysine from octanoyl-[acyl-carrier-protein]: step 2/2. Catalyzes the radical-mediated insertion of two sulfur atoms into the C-6 and C-8 positions of the octanoyl moiety bound to the lipoyl domains of lipoate-dependent enzymes, thereby converting the octanoylated domains into lipoylated derivatives. This is Lipoyl synthase from Xylella fastidiosa (strain M23).